Consider the following 265-residue polypeptide: MGQILGKIMMSHQPQPQEERSPQRSTSGYPLQEVVDDEVSGPSAPGVDPSPPRRSLGWKRKRECLDESDDEPEKELAPEPEETWVAETLCGLKMKAKRRRVSLVLPEYYEAFNRLLEDPVIKRLLAWDKDLRVSDKYLLAMVIAYFSRAGLPSWQYQRIHFFLALYLANDMEEDDEAPKQNIFYFLYEETRSHIPLLSELWFQLCRYMNPRARKNCSQIALFRKYRFHFFCSMRCRAWVSLEELEEIQAYDPEHWVWARDRAHLS.

The segment at 1–80 (MGQILGKIMM…EPEKELAPEP (80 aa)) is disordered. Over residues 66–80 (DESDDEPEKELAPEP) the composition is skewed to acidic residues.

The protein belongs to the Speedy/Ringo family.

The chain is Speedy protein E8 from Homo sapiens (Human).